Here is a 201-residue protein sequence, read N- to C-terminus: Cell division protein SepF (201 aa).

Positions 1–94 are disordered; sequence MALKDLFSGF…TTSKNNARNV (94 aa). The span at 13–28 shows a compositional bias: acidic residues; sequence VEEEDDELEAPPEENE. The span at 35–44 shows a compositional bias: low complexity; sequence PKQQAQSQNQ. The span at 59–88 shows a compositional bias: polar residues; sequence SIQSVPKKQSTRLQQSSGERKYQMNNTTSK.

The protein belongs to the SepF family. As to quaternary structure, homodimer. Interacts with FtsZ.

Its subcellular location is the cytoplasm. Its function is as follows. Cell division protein that is part of the divisome complex and is recruited early to the Z-ring. Probably stimulates Z-ring formation, perhaps through the cross-linking of FtsZ protofilaments. Its function overlaps with FtsA. In Staphylococcus saprophyticus subsp. saprophyticus (strain ATCC 15305 / DSM 20229 / NCIMB 8711 / NCTC 7292 / S-41), this protein is Cell division protein SepF.